Reading from the N-terminus, the 223-residue chain is MQWALGRRWVWAALLLAAAAVLTQVVWLWLGTQSFVFQHEEIAQLARQYAGLDHELAFSRLIVELRRLHPGHVLPDEELQWVFVNAGGWMGAMCLLHASLSEYVLLFGTALGSRGHSGRYWAEISDTIISGTFHQWREGTTKSEVFYPGETVVHGPGEATAVEWGPNTWMVEYGRGVIPSTLAFALADTIFSTQDFLTLFYTLRAYARGLRLEFTTYLFGQDS.

The Lumenal segment spans residues 1 to 9 (MQWALGRRW). Residues 2–8 (QWALGRR) are targeting to endoplasmic reticulum-associated lipid droplets. Residues 10 to 30 (VWAALLLAAAAVLTQVVWLWL) traverse the membrane as a helical segment. The Cytoplasmic segment spans residues 31–223 (GTQSFVFQHE…FTTYLFGQDS (193 aa)). Positions 99–106 (SLSEYVLL) are important for ligand-binding. The C-terminal hydrophobic region stretch occupies residues 177–223 (VIPSTLAFALADTIFSTQDFLTLFYTLRAYARGLRLEFTTYLFGQDS).

This sequence belongs to the ERG2 family. Homotrimer. Forms a ternary complex with ANK2 and ITPR3. The complex is disrupted by agonists. Interacts with KCNA4. Interacts with KCNA2; cocaine consumption leads to increased interaction. Interacts with RNF112 in an oxidative stress-regulated manner.

It localises to the nucleus inner membrane. The protein resides in the nucleus outer membrane. The protein localises to the nucleus envelope. Its subcellular location is the cytoplasmic vesicle. It is found in the endoplasmic reticulum membrane. It localises to the membrane. The protein resides in the lipid droplet. The protein localises to the cell junction. Its subcellular location is the cell membrane. It is found in the cell projection. It localises to the growth cone. The protein resides in the postsynaptic density membrane. Its function is as follows. Functions in lipid transport from the endoplasmic reticulum and is involved in a wide array of cellular functions probably through regulation of the biogenesis of lipid microdomains at the plasma membrane. Involved in the regulation of different receptors it plays a role in BDNF signaling and EGF signaling. Also regulates ion channels like the potassium channel and could modulate neurotransmitter release. Plays a role in calcium signaling through modulation together with ANK2 of the ITP3R-dependent calcium efflux at the endoplasmic reticulum. Plays a role in several other cell functions including proliferation, survival and death. Originally identified for its ability to bind various psychoactive drugs it is involved in learning processes, memory and mood alteration. Necessary for proper mitochondrial axonal transport in motor neurons, in particular the retrograde movement of mitochondria. Plays a role in protecting cells against oxidative stress-induced cell death via its interaction with RNF112. The protein is Sigma non-opioid intracellular receptor 1 (SIGMAR1) of Mustela erminea (Ermine).